Reading from the N-terminus, the 105-residue chain is MDTQDIVSEISELNLTYLMLAQQMLAKDRDAALFRLGISEELADILLTMSPAQIVKLASTNMMLCRFRFDDHAILGLVTQPHRDKGLQQSQMSILLARQAVEQIS.

This sequence belongs to the FlhD family. As to quaternary structure, homodimer; disulfide-linked. Forms a heterohexamer composed of two FlhC and four FlhD subunits. Each FlhC binds a FlhD dimer, forming a heterotrimer, and a hexamer assembles by dimerization of two heterotrimers.

The protein resides in the cytoplasm. Functionally, functions in complex with FlhC as a master transcriptional regulator that regulates transcription of several flagellar and non-flagellar operons by binding to their promoter region. Activates expression of class 2 flagellar genes, including fliA, which is a flagellum-specific sigma factor that turns on the class 3 genes. Also regulates genes whose products function in a variety of physiological pathways. The sequence is that of Flagellar transcriptional regulator FlhD from Ralstonia pickettii (strain 12J).